The chain runs to 456 residues: Solute carrier family 38 member 6 (456 aa).

N-acetylmethionine is present on methionine 1. A phosphoserine mark is found at serine 4 and serine 7. A run of 5 helical transmembrane segments spans residues 42–62 (SPGV…MGSG), 85–105 (VALL…QTAV), 111–131 (LGLF…IIIQ), 170–190 (LLII…KIGF), and 191–211 (LGYT…VVII). Residues cysteine 218 and cysteine 238 are joined by a disulfide bond. Asparagine 233 carries N-linked (GlcNAc...) asparagine glycosylation. The chain crosses the membrane as a helical span at residues 250 to 270 (AYALPTMAFSFLCHTSILPIY). Asparagine 283 carries an N-linked (GlcNAc...) asparagine glycan. Helical transmembrane passes span 288-308 (AIAL…LTFY), 327-347 (VVVM…VPLI), 371-391 (FLIT…VPDI), 394-414 (VFGV…PGLF), and 431-451 (AFVL…LIIF).

Belongs to the amino acid/polyamine transporter 2 family.

Its subcellular location is the cell membrane. It is found in the synapse. It carries out the reaction L-glutamine(out) = L-glutamine(in). The enzyme catalyses L-glutamate(out) = L-glutamate(in). Its function is as follows. Amino acid transporter with an apparent selectivity for L-glutamine and L-glutamate. May facilitate glutamine uptake in excitatory neurons. The transport mechanism remains to be elucidated. The sequence is that of Solute carrier family 38 member 6 from Homo sapiens (Human).